Reading from the N-terminus, the 623-residue chain is tRNA uridine 5-carboxymethylaminomethyl modification enzyme MnmG (623 aa).

12–17 (GAGHAG) contributes to the FAD binding site. 272–286 (GPRYCPSIEDKINRF) contributes to the NAD(+) binding site.

The protein belongs to the MnmG family. As to quaternary structure, homodimer. Heterotetramer of two MnmE and two MnmG subunits. It depends on FAD as a cofactor.

The protein resides in the cytoplasm. In terms of biological role, NAD-binding protein involved in the addition of a carboxymethylaminomethyl (cmnm) group at the wobble position (U34) of certain tRNAs, forming tRNA-cmnm(5)s(2)U34. This chain is tRNA uridine 5-carboxymethylaminomethyl modification enzyme MnmG, found in Flavobacterium psychrophilum (strain ATCC 49511 / DSM 21280 / CIP 103535 / JIP02/86).